The primary structure comprises 305 residues: Nucleotide-binding protein Mjls_2437 (305 aa).

ATP is bound at residue 28–35 (GLSGAGRG). A GTP-binding site is contributed by 79–82 (DVRS).

It belongs to the RapZ-like family.

In terms of biological role, displays ATPase and GTPase activities. In Mycobacterium sp. (strain JLS), this protein is Nucleotide-binding protein Mjls_2437.